The sequence spans 204 residues: Dual-action ribosomal maturation protein DarP (204 aa).

Disordered regions lie at residues 1–31 (MPPM…SKSQ) and 182–204 (GGAS…DDEA). Positions 186–204 (DSDDEAADDAGDDHDDDEA) are enriched in acidic residues.

This sequence belongs to the DarP family.

Its subcellular location is the cytoplasm. Member of a network of 50S ribosomal subunit biogenesis factors which assembles along the 30S-50S interface, preventing incorrect 23S rRNA structures from forming. Promotes peptidyl transferase center (PTC) maturation. The sequence is that of Dual-action ribosomal maturation protein DarP from Burkholderia orbicola (strain MC0-3).